A 138-amino-acid polypeptide reads, in one-letter code: MAKPILRIGSRKNTRSSSRKNVRRIPKGVIHVQASFNNTIVTVTDVRGRVISWSSAGTCGFRGTRRGTPFAAQTAAGNAIRAVVDQGMQRAEVRIKGPGLGRDAALRAIRRSGILLSFVRDVTPMPHNGCRPPKKRRV.

Residues 1-23 (MAKPILRIGSRKNTRSSSRKNVR) are disordered. The span at 9-23 (GSRKNTRSSSRKNVR) shows a compositional bias: basic residues.

Belongs to the universal ribosomal protein uS11 family. As to quaternary structure, part of the 30S ribosomal subunit.

The protein localises to the plastid. Its subcellular location is the chloroplast. The protein is Small ribosomal subunit protein uS11c of Nasturtium officinale (Watercress).